Consider the following 367-residue polypeptide: DNA replication and repair protein RecF (367 aa).

Residue 30–37 (GANGSGKT) participates in ATP binding.

The protein belongs to the RecF family.

The protein localises to the cytoplasm. Functionally, the RecF protein is involved in DNA metabolism; it is required for DNA replication and normal SOS inducibility. RecF binds preferentially to single-stranded, linear DNA. It also seems to bind ATP. The polypeptide is DNA replication and repair protein RecF (Pseudomonas entomophila (strain L48)).